Consider the following 828-residue polypeptide: Periplasmic nitrate reductase (828 aa).

A signal peptide (tat-type signal) is located at residues 1–31 (MKLSRRSFMKANAVAAAAAAAGLSVPGVARA). The 4Fe-4S Mo/W bis-MGD-type domain maps to 39 to 95 (IKWDKAPCRFCGTGCGVLVGTQQGRVVACQGDPDAPVNRGLNCIKGYFLPKIMYGKD). 4 residues coordinate [4Fe-4S] cluster: C46, C49, C53, and C81. Mo-bis(molybdopterin guanine dinucleotide) is bound by residues K83, Q150, N175, C179, 212–219 (WGSNMAEM), 243–247 (STFQH), 262–264 (QSD), M372, Q376, N482, 508–509 (SD), K531, D558, and 718–727 (TGRVLEHWHT). Residue F794 participates in substrate binding. Mo-bis(molybdopterin guanine dinucleotide) is bound by residues N802 and K819.

The protein belongs to the prokaryotic molybdopterin-containing oxidoreductase family. NasA/NapA/NarB subfamily. As to quaternary structure, component of the periplasmic nitrate reductase NapAB complex composed of NapA and NapB. The cofactor is [4Fe-4S] cluster. It depends on Mo-bis(molybdopterin guanine dinucleotide) as a cofactor. Post-translationally, predicted to be exported by the Tat system. The position of the signal peptide cleavage has not been experimentally proven.

It localises to the periplasm. The enzyme catalyses 2 Fe(II)-[cytochrome] + nitrate + 2 H(+) = 2 Fe(III)-[cytochrome] + nitrite + H2O. In terms of biological role, catalytic subunit of the periplasmic nitrate reductase complex NapAB. Receives electrons from NapB and catalyzes the reduction of nitrate to nitrite. The polypeptide is Periplasmic nitrate reductase (Salmonella schwarzengrund (strain CVM19633)).